A 453-amino-acid polypeptide reads, in one-letter code: Bifunctional protein GlmU (453 aa).

The interval 1–225 (MNIVILAAGT…DWETLGVNSK (225 aa)) is pyrophosphorylase. Residues 6–9 (LAAG), K20, Q71, 76–77 (GT), 98–100 (YGD), G135, E150, N165, and N223 each bind UDP-N-acetyl-alpha-D-glucosamine. D100 provides a ligand contact to Mg(2+). N223 contacts Mg(2+). The tract at residues 226-246 (AQLAELERIHQRNVADALLVE) is linker. The interval 247 to 453 (GVTLADPARV…GYVRPVKKKS (207 aa)) is N-acetyltransferase. UDP-N-acetyl-alpha-D-glucosamine is bound by residues R329 and K347. Residue H359 is the Proton acceptor of the active site. Residues Y362 and N373 each coordinate UDP-N-acetyl-alpha-D-glucosamine. Acetyl-CoA is bound by residues A376, 382-383 (NY), S401, and A419.

This sequence in the N-terminal section; belongs to the N-acetylglucosamine-1-phosphate uridyltransferase family. It in the C-terminal section; belongs to the transferase hexapeptide repeat family. Homotrimer. Mg(2+) is required as a cofactor.

The protein localises to the cytoplasm. It catalyses the reaction alpha-D-glucosamine 1-phosphate + acetyl-CoA = N-acetyl-alpha-D-glucosamine 1-phosphate + CoA + H(+). The enzyme catalyses N-acetyl-alpha-D-glucosamine 1-phosphate + UTP + H(+) = UDP-N-acetyl-alpha-D-glucosamine + diphosphate. Its pathway is nucleotide-sugar biosynthesis; UDP-N-acetyl-alpha-D-glucosamine biosynthesis; N-acetyl-alpha-D-glucosamine 1-phosphate from alpha-D-glucosamine 6-phosphate (route II): step 2/2. It participates in nucleotide-sugar biosynthesis; UDP-N-acetyl-alpha-D-glucosamine biosynthesis; UDP-N-acetyl-alpha-D-glucosamine from N-acetyl-alpha-D-glucosamine 1-phosphate: step 1/1. It functions in the pathway bacterial outer membrane biogenesis; LPS lipid A biosynthesis. Its function is as follows. Catalyzes the last two sequential reactions in the de novo biosynthetic pathway for UDP-N-acetylglucosamine (UDP-GlcNAc). The C-terminal domain catalyzes the transfer of acetyl group from acetyl coenzyme A to glucosamine-1-phosphate (GlcN-1-P) to produce N-acetylglucosamine-1-phosphate (GlcNAc-1-P), which is converted into UDP-GlcNAc by the transfer of uridine 5-monophosphate (from uridine 5-triphosphate), a reaction catalyzed by the N-terminal domain. This Burkholderia vietnamiensis (strain G4 / LMG 22486) (Burkholderia cepacia (strain R1808)) protein is Bifunctional protein GlmU.